We begin with the raw amino-acid sequence, 232 residues long: YlmG homolog protein 1-1, chloroplastic (232 aa).

The N-terminal 16 residues, methionine 1–proline 16, are a transit peptide targeting the chloroplast. The next 2 helical transmembrane spans lie at leucine 147–valine 167 and isoleucine 201–glycine 221.

It belongs to the YggT family.

The protein localises to the plastid. Its subcellular location is the chloroplast thylakoid membrane. Its function is as follows. Required for the proper distribution of nucleoids in chloroplasts. The nucleoid partitioning by YLMG1-1 may be related to chloroplast division processes. This is YlmG homolog protein 1-1, chloroplastic from Arabidopsis thaliana (Mouse-ear cress).